A 152-amino-acid polypeptide reads, in one-letter code: Transcriptional regulator MraZ (152 aa).

SpoVT-AbrB domains lie at 5–52 (ATLV…PLPE) and 81–124 (ASEC…DETT).

It belongs to the MraZ family. In terms of assembly, forms oligomers.

It localises to the cytoplasm. It is found in the nucleoid. Its function is as follows. Negatively regulates its own expression and that of the subsequent genes in the proximal part of the division and cell wall (dcw) gene cluster. Acts by binding directly to DNA. May also regulate the expression of genes outside the dcw cluster. The polypeptide is Transcriptional regulator MraZ (Shigella flexneri serotype 5b (strain 8401)).